Here is a 501-residue protein sequence, read N- to C-terminus: Aspartate--tRNA ligase, cytoplasmic (501 aa).

Phosphothreonine is present on Thr52. Lys74 bears the N6-acetyllysine mark. Glu229 lines the L-aspartate pocket. Ser249 carries the phosphoserine modification. The aspartate stretch occupies residues 251–254; sequence QLYK. An L-aspartate-binding site is contributed by Arg273. Residues 273–275 and 281–283 each bind ATP; these read RAE and RHL. Lys374 bears the N6-acetyllysine mark. The segment at 411–415 is binding site for the 3'-end of tRNA; that stretch reads KQSNS. Glu424 is an ATP binding site. L-aspartate-binding residues include Ser427 and Arg431. 472-475 contributes to the ATP binding site; sequence GLER. Thr500 is subject to Phosphothreonine; by PKA.

It belongs to the class-II aminoacyl-tRNA synthetase family. Type 2 subfamily. In terms of assembly, homodimer. Part of a multisubunit complex that groups tRNA ligases for Arg (RARS1), Asp (DARS1), Gln (QARS1), Ile (IARS1), Leu (LARS1), Lys (KARS1), Met (MARS1) the bifunctional ligase for Glu and Pro (EPRS1) and the auxiliary subunits AIMP1/p43, AIMP2/p38 and EEF1E1/p18.

It is found in the cytoplasm. It carries out the reaction tRNA(Asp) + L-aspartate + ATP = L-aspartyl-tRNA(Asp) + AMP + diphosphate. Its function is as follows. Catalyzes the specific attachment of an amino acid to its cognate tRNA in a 2 step reaction: the amino acid (AA) is first activated by ATP to form AA-AMP and then transferred to the acceptor end of the tRNA. This is Aspartate--tRNA ligase, cytoplasmic (DARS1) from Bos taurus (Bovine).